The chain runs to 113 residues: uncharacterized protein (113 aa).

Disordered regions lie at residues 1–22 (MGEH…PLAQ) and 90–113 (DGRH…SDDL). Over residues 90-99 (DGRHTTESSF) the composition is skewed to basic and acidic residues. Over residues 100 to 113 (EHSSPSRSPQSDDL) the composition is skewed to low complexity.

This is an uncharacterized protein from Mycobacterium tuberculosis (strain ATCC 25618 / H37Rv).